We begin with the raw amino-acid sequence, 139 residues long: D-ribose pyranase (139 aa).

The active-site Proton donor is H20. Substrate-binding positions include D28, H106, and 128-130; that span reads YAN.

It belongs to the RbsD / FucU family. RbsD subfamily. In terms of assembly, homodecamer.

It localises to the cytoplasm. It carries out the reaction beta-D-ribopyranose = beta-D-ribofuranose. Its pathway is carbohydrate metabolism; D-ribose degradation; D-ribose 5-phosphate from beta-D-ribopyranose: step 1/2. Functionally, catalyzes the interconversion of beta-pyran and beta-furan forms of D-ribose. In Salmonella arizonae (strain ATCC BAA-731 / CDC346-86 / RSK2980), this protein is D-ribose pyranase.